We begin with the raw amino-acid sequence, 407 residues long: Glucose-1-phosphate adenylyltransferase 2 (407 aa).

Alpha-D-glucose 1-phosphate contacts are provided by residues Tyr-97, Gly-162, 177–178, and Ser-195; that span reads EK.

The protein belongs to the bacterial/plant glucose-1-phosphate adenylyltransferase family. Homotetramer.

It carries out the reaction alpha-D-glucose 1-phosphate + ATP + H(+) = ADP-alpha-D-glucose + diphosphate. Its pathway is glycan biosynthesis; glycogen biosynthesis. In terms of biological role, involved in the biosynthesis of ADP-glucose, a building block required for the elongation reactions to produce glycogen. Catalyzes the reaction between ATP and alpha-D-glucose 1-phosphate (G1P) to produce pyrophosphate and ADP-Glc. This chain is Glucose-1-phosphate adenylyltransferase 2, found in Vibrio cholerae serotype O1 (strain ATCC 39315 / El Tor Inaba N16961).